The primary structure comprises 512 residues: Phosphotransferase UL97 homolog (512 aa).

Asp-274 acts as the Proton acceptor in catalysis.

The protein belongs to the protein kinase superfamily. Tyr protein kinase family.

The catalysed reaction is L-tyrosyl-[protein] + ATP = O-phospho-L-tyrosyl-[protein] + ADP + H(+). This Elephantid herpesvirus 1 (isolate Asian elephant/Berlin/Kiba/1998) (EIHV-1) protein is Phosphotransferase UL97 homolog.